A 362-amino-acid chain; its full sequence is MMKRNILAVIVPALLVAGTANAAEIYNKDGNKVDLYGKAVGLHYFSKGNGENSYGGNGDMTYARLGFKGETQINSDLTGYGQWEYNFQGNNSEGADAQTGNKTRLAFAGLKYADVGSFDYGRNYGVVYDALGYTDMLPEFGGDTAYSDDFFVGRVGGVATYRNSNFFGLVDGLNFAVQYLGKNERDTARRSNGDGVGGSISYEYEGFGIVGAYGAADRTNLQEAQPLGNGKKAEQWATGLKYDANNIYLAANYGETRNATPITNKFTNTSGFANKTQDVLLVAQYQFDFGLRPSIAYTKSKAKDVEGIGDVDLVNYFEVGATYYFNKNMSTYVDYIINQIDSDNKLGVGSDDTVAVGIVYQF.

Residues 1 to 22 (MMKRNILAVIVPALLVAGTANA) form the signal peptide. A beta stranded transmembrane segment spans residues 23-28 (AEIYNK). Position 29 (aspartate 29) is a topological domain, periplasmic. Residues 30 to 45 (GNKVDLYGKAVGLHYF) form a beta stranded membrane-spanning segment. The Extracellular portion of the chain corresponds to 46–60 (SKGNGENSYGGNGDM). Residues 61–73 (TYARLGFKGETQI) traverse the membrane as a beta stranded segment. Residues 74–75 (NS) lie on the Periplasmic side of the membrane. A beta stranded transmembrane segment spans residues 76–88 (DLTGYGQWEYNFQ). Over 89-104 (GNNSEGADAQTGNKTR) the chain is Extracellular. Residues 105 to 113 (LAFAGLKYA) traverse the membrane as a beta stranded segment. Topologically, residues 114–115 (DV) are periplasmic. Residues 116–122 (GSFDYGR) traverse the membrane as a beta stranded segment. Residues 123–156 (NYGVVYDALGYTDMLPEFGGDTAYSDDFFVGRVG) are Extracellular-facing. The beta stranded transmembrane segment at 157-163 (GVATYRN) threads the bilayer. Topologically, residues 164 to 171 (SNFFGLVD) are periplasmic. The beta stranded transmembrane segment at 172 to 181 (GLNFAVQYLG) threads the bilayer. Over 182-193 (KNERDTARRSNG) the chain is Extracellular. A beta stranded transmembrane segment spans residues 194-204 (DGVGGSISYEY). Glutamate 205 is a topological domain (periplasmic). The beta stranded transmembrane segment at 206-217 (GFGIVGAYGAAD) threads the bilayer. The Extracellular segment spans residues 218–232 (RTNLQEAQPLGNGKK). A beta stranded transmembrane segment spans residues 233–244 (AEQWATGLKYDA). Position 245 (asparagine 245) is a topological domain, periplasmic. A beta stranded transmembrane segment spans residues 246-257 (NIYLAANYGETR). The Extracellular segment spans residues 258-274 (NATPITNKFTNTSGFAN). The chain crosses the membrane as a beta stranded span at residues 275 to 287 (KTQDVLLVAQYQF). The Periplasmic segment spans residues 288–289 (DF). Residues 290 to 303 (GLRPSIAYTKSKAK) traverse the membrane as a beta stranded segment. The Extracellular segment spans residues 304–313 (DVEGIGDVDL). Residues 314-325 (VNYFEVGATYYF) form a beta stranded membrane-spanning segment. Topologically, residues 326–327 (NK) are periplasmic. A beta stranded transmembrane segment spans residues 328–337 (NMSTYVDYII). Residues 338–352 (NQIDSDNKLGVGSDD) lie on the Extracellular side of the membrane. The chain crosses the membrane as a beta stranded span at residues 353 to 362 (TVAVGIVYQF).

It belongs to the Gram-negative porin family. As to quaternary structure, homotrimer. Forms mixed heterotrimers with OmpC and with PhoE; other mixed heterotrimers are also probable. In terms of assembly, (Microbial infection) Trimeric complexes with colicin E3, BtuB and OmpF can be cross-linked and immunoprecipitated.

The protein localises to the cell outer membrane. Functionally, forms pores that allow passive diffusion of small molecules across the outer membrane. Its function is as follows. (Microbial infection) It is also a receptor for the bacteriophage T2. Is the major receptor for colicin E5. (Microbial infection) Probably translocates colicin E3 (and other A-type colicins) across the outer membrane. In terms of biological role, (Microbial infection) A mixed OmpC-OmpF heterotrimer is the outer membrane receptor for toxin CdiA-EC536 (ECL_04451); polymorphisms in extracellular loops 4 and 5 of OmpC confer susceptibility to CdiA-EC536-mediated toxicity. The sequence is that of Outer membrane porin F (ompF) from Escherichia coli (strain K12).